The chain runs to 212 residues: Probable NADH dehydrogenase [ubiquinone] iron-sulfur protein 8, mitochondrial (212 aa).

4Fe-4S ferredoxin-type domains lie at 104-133 (RRYPSGEERCIACKLCEAICPAQAITIEAE) and 143-172 (TRYDIDMTKCIYCGLCQEACPVDAIVEGPN). 8 residues coordinate [4Fe-4S] cluster: Cys113, Cys116, Cys119, Cys123, Cys152, Cys155, Cys158, and Cys162.

It belongs to the complex I 23 kDa subunit family. As to quaternary structure, complex I is composed of 45 different subunits This is a component of the iron-sulfur (IP) fragment of the enzyme. It depends on [4Fe-4S] cluster as a cofactor.

It is found in the mitochondrion. It carries out the reaction a ubiquinone + NADH + 5 H(+)(in) = a ubiquinol + NAD(+) + 4 H(+)(out). In terms of biological role, core subunit of the mitochondrial membrane respiratory chain NADH dehydrogenase (Complex I) that is believed to belong to the minimal assembly required for catalysis. Complex I functions in the transfer of electrons from NADH to the respiratory chain. The immediate electron acceptor for the enzyme is believed to be ubiquinone. The sequence is that of Probable NADH dehydrogenase [ubiquinone] iron-sulfur protein 8, mitochondrial from Caenorhabditis elegans.